The sequence spans 382 residues: Alkanesulfonate monooxygenase (382 aa).

This sequence belongs to the SsuD family.

The catalysed reaction is an alkanesulfonate + FMNH2 + O2 = an aldehyde + FMN + sulfite + H2O + 2 H(+). Its function is as follows. Catalyzes the desulfonation of aliphatic sulfonates. This Pseudomonas sp protein is Alkanesulfonate monooxygenase.